The chain runs to 60 residues: Potassium channel toxin alpha-KTx 29.1 (60 aa).

The N-terminal stretch at Met-1–Ala-28 is a signal peptide. Intrachain disulfides connect Cys-32–Cys-51, Cys-40–Cys-56, and Cys-44–Cys-58.

Belongs to the short scorpion toxin superfamily. Potassium channel inhibitor family. Alpha-KTx 29 subfamily. As to expression, expressed by the venom gland.

The protein localises to the secreted. In terms of biological role, weakly inhibits the Kv1.3/KCNA3 channel (1 uM of the toxin inhibits currents by 13.2%) and Kv7.1/KCNQ1 channel (10 uM of the toxin inhibits currents by 27.7%). This is Potassium channel toxin alpha-KTx 29.1 from Lychas mucronatus (Chinese swimming scorpion).